Here is a 102-residue protein sequence, read N- to C-terminus: NADH-quinone oxidoreductase subunit K (102 aa).

3 helical membrane-spanning segments follow: residues 6–26 (LTGFMILAAGLFAAGVFGVLA), 30–50 (ILFQLIALEVALSGPALAFIA), and 63–83 (MFVLTLTLAAAEVAVGLALFL).

It belongs to the complex I subunit 4L family. In terms of assembly, NDH-1 is composed of 14 different subunits. Subunits NuoA, H, J, K, L, M, N constitute the membrane sector of the complex.

It localises to the cell inner membrane. The catalysed reaction is a quinone + NADH + 5 H(+)(in) = a quinol + NAD(+) + 4 H(+)(out). NDH-1 shuttles electrons from NADH, via FMN and iron-sulfur (Fe-S) centers, to quinones in the respiratory chain. The immediate electron acceptor for the enzyme in this species is believed to be ubiquinone. Couples the redox reaction to proton translocation (for every two electrons transferred, four hydrogen ions are translocated across the cytoplasmic membrane), and thus conserves the redox energy in a proton gradient. The sequence is that of NADH-quinone oxidoreductase subunit K from Rhodopseudomonas palustris (strain BisA53).